A 321-amino-acid chain; its full sequence is GTP 3',8-cyclase (321 aa).

Positions 5-233 (SFNRVIDYIR…QGSSKIYTLE (229 aa)) constitute a Radical SAM core domain. Residue arginine 14 coordinates GTP. Residues cysteine 21 and cysteine 25 each coordinate [4Fe-4S] cluster. Tyrosine 27 contributes to the S-adenosyl-L-methionine binding site. Cysteine 28 contributes to the [4Fe-4S] cluster binding site. Arginine 64 serves as a coordination point for GTP. Residue glycine 68 participates in S-adenosyl-L-methionine binding. A GTP-binding site is contributed by serine 95. Serine 119 contacts S-adenosyl-L-methionine. Lysine 155 contacts GTP. Residue methionine 189 participates in S-adenosyl-L-methionine binding. [4Fe-4S] cluster-binding residues include cysteine 249 and cysteine 252. Residue 254 to 256 (RIR) coordinates GTP. Residue cysteine 266 participates in [4Fe-4S] cluster binding.

Belongs to the radical SAM superfamily. MoaA family. Monomer and homodimer. It depends on [4Fe-4S] cluster as a cofactor.

It carries out the reaction GTP + AH2 + S-adenosyl-L-methionine = (8S)-3',8-cyclo-7,8-dihydroguanosine 5'-triphosphate + 5'-deoxyadenosine + L-methionine + A + H(+). It participates in cofactor biosynthesis; molybdopterin biosynthesis. Functionally, catalyzes the cyclization of GTP to (8S)-3',8-cyclo-7,8-dihydroguanosine 5'-triphosphate. This Helicobacter pylori (strain HPAG1) protein is GTP 3',8-cyclase.